Reading from the N-terminus, the 569-residue chain is Rab GTPase-binding effector protein 2 (569 aa).

Disordered regions lie at residues 1–38 (MAAA…AELG), 181–267 (QRRP…ASLV), and 388–414 (RAEQ…PSSV). Ala-2 carries the post-translational modification N-acetylalanine. The span at 29–38 (EGANGEAELG) shows a compositional bias: low complexity. Residues 34 to 184 (EAELGELSRL…ELIQEIQRRP (151 aa)) are a coiled coil. Phosphoserine is present on residues Ser-189, Ser-193, Ser-200, and Ser-204. A compositionally biased stretch (low complexity) spans 245 to 257 (SSSSLPRSRQGLS). Residues 292–391 (WEQLQMEGRQ…EENQGLRAEQ (100 aa)) are a coiled coil. Positions 393–403 (PSSAPQGPQQE) are enriched in low complexity. Residues 423-523 (RTRQEARAQL…LQAELETSEQ (101 aa)) adopt a coiled-coil conformation.

This sequence belongs to the rabaptin family. In terms of assembly, heterodimer with RABGEF1. The dimer binds RAB5A that has been activated by GTP-binding. Interacts with SDCCAG8; this interaction is important for ciliogenesis regulation. Interacts with RAB4; this interaction may mediate VEGFR2 cell surface expression.

The protein resides in the cytoplasm. It localises to the early endosome. Its subcellular location is the cytoskeleton. The protein localises to the microtubule organizing center. It is found in the centrosome. The protein resides in the cilium basal body. Its function is as follows. Plays a role in membrane trafficking and in homotypic early endosome fusion. Participates in arteriogenesis by regulating vascular endothelial growth factor receptor 2/VEGFR2 cell surface expression and endosomal trafficking. By interacting with SDCCAG8, localizes to centrosomes and plays a critical role in ciliogenesis. The sequence is that of Rab GTPase-binding effector protein 2 (RABEP2) from Pongo abelii (Sumatran orangutan).